The sequence spans 264 residues: Phosphatidylinositol transfer protein 1 (264 aa).

The tract at residues 151 to 174 (NYKETEDPTKIRSEKANRGPLEEE) is disordered. The stretch at 238–264 (VRAFELKTKEDLKKKLEEKDENKAAEK) forms a coiled coil.

It belongs to the PtdIns transfer protein family. PI transfer class I subfamily. In terms of processing, phosphorylated in response to activation of rasG.

Its subcellular location is the cytoplasm. The protein localises to the golgi apparatus. Functionally, catalyzes the transfer of PtdIns and phosphatidylcholine between membranes. The polypeptide is Phosphatidylinositol transfer protein 1 (pitA) (Dictyostelium discoideum (Social amoeba)).